Reading from the N-terminus, the 1183-residue chain is DNA-directed RNA polymerase subunit beta (1183 aa).

It belongs to the RNA polymerase beta chain family. In terms of assembly, the RNAP catalytic core consists of 2 alpha, 1 beta, 1 beta' and 1 omega subunit. When a sigma factor is associated with the core the holoenzyme is formed, which can initiate transcription.

The catalysed reaction is RNA(n) + a ribonucleoside 5'-triphosphate = RNA(n+1) + diphosphate. Its function is as follows. DNA-dependent RNA polymerase catalyzes the transcription of DNA into RNA using the four ribonucleoside triphosphates as substrates. The sequence is that of DNA-directed RNA polymerase subunit beta from Staphylococcus aureus (strain COL).